A 366-amino-acid chain; its full sequence is Phosphate acyltransferase (366 aa).

The tract at residues 334–366 (ESAKNKETQSKQASTKNTAPKTSETTKESQQSL) is disordered. The span at 343–366 (SKQASTKNTAPKTSETTKESQQSL) shows a compositional bias: polar residues.

The protein belongs to the PlsX family. Homodimer. Probably interacts with PlsY.

The protein localises to the cytoplasm. It catalyses the reaction a fatty acyl-[ACP] + phosphate = an acyl phosphate + holo-[ACP]. Its pathway is lipid metabolism; phospholipid metabolism. Its function is as follows. Catalyzes the reversible formation of acyl-phosphate (acyl-PO(4)) from acyl-[acyl-carrier-protein] (acyl-ACP). This enzyme utilizes acyl-ACP as fatty acyl donor, but not acyl-CoA. This chain is Phosphate acyltransferase, found in Onion yellows phytoplasma (strain OY-M).